The following is a 69-amino-acid chain: Calcium-binding protein (69 aa).

EF-hand domains lie at 2-37 and 38-69; these read VNRT…VNCP and FKKE…VLCS. Ca(2+) contacts are provided by Asp15, Asp17, Ser19, Lys21, Glu26, Asp51, Asp53, Asp55, Gln57, and Glu62.

The chain is Calcium-binding protein from Schistosoma mansoni (Blood fluke).